Here is a 440-residue protein sequence, read N- to C-terminus: 23S rRNA (uracil(1939)-C(5))-methyltransferase RlmD (440 aa).

The TRAM domain maps to 11–69 (STLDTKHQPVTIERLDHQGSGLAFLHKKPLFVDGALPGEEVLIQLTENKSKYARGQLIK). [4Fe-4S] cluster-binding residues include Cys-82, Cys-88, Cys-91, and Cys-169. Residues Gln-272, Phe-301, Asn-306, Glu-322, Asn-349, and Asp-370 each coordinate S-adenosyl-L-methionine. Cys-396 (nucleophile) is an active-site residue.

This sequence belongs to the class I-like SAM-binding methyltransferase superfamily. RNA M5U methyltransferase family. RlmD subfamily.

It carries out the reaction uridine(1939) in 23S rRNA + S-adenosyl-L-methionine = 5-methyluridine(1939) in 23S rRNA + S-adenosyl-L-homocysteine + H(+). Catalyzes the formation of 5-methyl-uridine at position 1939 (m5U1939) in 23S rRNA. This chain is 23S rRNA (uracil(1939)-C(5))-methyltransferase RlmD, found in Vibrio cholerae serotype O1 (strain ATCC 39541 / Classical Ogawa 395 / O395).